Here is a 508-residue protein sequence, read N- to C-terminus: MIIWKDTAKNMSLLSKSVPAKYAVDFEVPKGITEGYVTSDKKRFTYHVSISSVAPYSNESDVIQKKKSGLKSIMEIEKIQKIEPISIMEFRSSGKRIDELLTYAIAERETAEIREKYEYEKKVSSQVLDVIAEAKKLGYNIPESVAEEILRRKEEWGEKKYREILKRIGEEIQDELIDPYEAVGIIAAQSIGEPGTQMTMRTFHFAGVREMNVTLGLPRLIEIVDARRIPSTPSMTIYLKPEFETNDEVVMDVVKRLENTSVSDVADIITDIGELTITVRPDPNKMNDRLINQDDLVNAIYKVKGVTVMEESGQIIVKPQQESFKKLYLLQEQIKALPIKGISGIKRAIARVEGKEHRWVIYTQGSNLKDVLEVDEVDPTRTYTNDIVEIATVLGIEAARNAILNEAQRTLQEQGLNVDVRHLMLVADMMTFSGSVRAVGRTGISGRKSSVLARAAFEITTKHLLRAGIMGEVDKLAGVAENIIVGQPITLGTGAVDIIYKGYPKTKK.

The segment at 1 to 123 (MIIWKDTAKN…REKYEYEKKV (123 aa)) is unknown. The interval 124–508 (SSQVLDVIAE…IYKGYPKTKK (385 aa)) is DNA-directed RNA polymerase subunit Rpo1C.

Belongs to the RNA polymerase beta' chain family. As to quaternary structure, part of the RNA polymerase complex.

It is found in the cytoplasm. It catalyses the reaction RNA(n) + a ribonucleoside 5'-triphosphate = RNA(n+1) + diphosphate. In terms of biological role, DNA-dependent RNA polymerase (RNAP) catalyzes the transcription of DNA into RNA using the four ribonucleoside triphosphates as substrates. Forms part of the jaw domain. The protein is DNA-directed RNA polymerase subunit Rpo1C of Thermoplasma volcanium (strain ATCC 51530 / DSM 4299 / JCM 9571 / NBRC 15438 / GSS1).